The primary structure comprises 1363 residues: DNA-directed RNA polymerase subunit beta (1363 aa).

Belongs to the RNA polymerase beta chain family. As to quaternary structure, the RNAP catalytic core consists of 2 alpha, 1 beta, 1 beta' and 1 omega subunit. When a sigma factor is associated with the core the holoenzyme is formed, which can initiate transcription.

The enzyme catalyses RNA(n) + a ribonucleoside 5'-triphosphate = RNA(n+1) + diphosphate. DNA-dependent RNA polymerase catalyzes the transcription of DNA into RNA using the four ribonucleoside triphosphates as substrates. This is DNA-directed RNA polymerase subunit beta from Syntrophus aciditrophicus (strain SB).